The sequence spans 82 residues: uncharacterized protein (82 aa).

This is an uncharacterized protein from Escherichia coli (strain K12).